The chain runs to 648 residues: Pesticidal crystal protein Cry19Aa (648 aa).

Belongs to the delta endotoxin family.

Functionally, promotes colloidosmotic lysis by binding to the midgut epithelial cells of mosquitos. This chain is Pesticidal crystal protein Cry19Aa (cry19Aa), found in Bacillus thuringiensis subsp. jegathesan.